We begin with the raw amino-acid sequence, 357 residues long: 3-isopropylmalate dehydrogenase (357 aa).

The substrate site is built by R97, R107, R135, and D224. Mg(2+) contacts are provided by D224, D248, and D252. 282–294 (GSAPDIAGQDKAN) is a binding site for NAD(+).

Belongs to the isocitrate and isopropylmalate dehydrogenases family. LeuB type 1 subfamily. As to quaternary structure, homodimer. Requires Mg(2+) as cofactor. The cofactor is Mn(2+).

It localises to the cytoplasm. It catalyses the reaction (2R,3S)-3-isopropylmalate + NAD(+) = 4-methyl-2-oxopentanoate + CO2 + NADH. The protein operates within amino-acid biosynthesis; L-leucine biosynthesis; L-leucine from 3-methyl-2-oxobutanoate: step 3/4. Functionally, catalyzes the oxidation of 3-carboxy-2-hydroxy-4-methylpentanoate (3-isopropylmalate) to 3-carboxy-4-methyl-2-oxopentanoate. The product decarboxylates to 4-methyl-2 oxopentanoate. In Parasynechococcus marenigrum (strain WH8102), this protein is 3-isopropylmalate dehydrogenase.